A 410-amino-acid chain; its full sequence is Squalene synthase 1 (410 aa).

G2 is subject to N-acetylglycine. The next 2 membrane-spanning stretches (helical) occupy residues 283–303 (SIFR…ALCY) and 387–407 (QPNS…FAYL).

The protein belongs to the phytoene/squalene synthase family. The cofactor is Mg(2+). It depends on Mn(2+) as a cofactor. In terms of tissue distribution, expressed in all tissues analyzed (seedlings, cotyledons, inflorescences, siliques, leaves, stems and roots). Highly expressed in roots and pollen.

The protein resides in the endoplasmic reticulum membrane. It catalyses the reaction 2 (2E,6E)-farnesyl diphosphate + NADPH + H(+) = squalene + 2 diphosphate + NADP(+). The enzyme catalyses 2 (2E,6E)-farnesyl diphosphate + NADH + H(+) = squalene + 2 diphosphate + NAD(+). Its pathway is terpene metabolism; lanosterol biosynthesis; lanosterol from farnesyl diphosphate: step 1/3. The polypeptide is Squalene synthase 1 (Arabidopsis thaliana (Mouse-ear cress)).